The primary structure comprises 71 residues: uncharacterized protein (71 aa).

Residues 52–71 are disordered; that stretch reads KEKFERKEDEKSKPKGVRED.

This is an uncharacterized protein from Archaeoglobus fulgidus (strain ATCC 49558 / DSM 4304 / JCM 9628 / NBRC 100126 / VC-16).